We begin with the raw amino-acid sequence, 465 residues long: MACTTILVGKKASYDGSTMVARTEDSQNGDFTPKKMIVVKPEDQPRHYRSVQSSFEMDLPDNPMTYTSVPDALGKDGIWAEAGVNEANVAMSATETITTNSRVLGADPLVASGIGEEDMVTLVLPYIRSAREGVLRLGAILEDYGTYESNGVAFSDEHDIWWLETIGGHHWIARRVPDDAYVTNPNQFGIDHFEFNNPEDYLCSADLKDFIDTYHLDLTYSHEHFNPRYAFGSQRDKDRQYNTPRVWIMQKFLNPEIVQDPRSFALAWCQKPYRKITVEDVKYVLSSHYQDTVYDPYGSEGTPVSKKVFRPIGINRTSQTAILHIRPNKPQEIAAIQWMAYGSMPFNTMVPFFTQVKTIPDYFANTYENVSTDNFYWTNRLIAALADPHYNHHETDLDNYLEETMAKGHAMLHAVEAQLLAGETVDLEEENQKMSDYVQGETQTLLNKILFDASNLMTNRFSLSD.

Cys3 is a catalytic residue.

It belongs to the peptidase C69 family.

It carries out the reaction an L-aminoacyl-L-amino acid + H2O = 2 an L-alpha-amino acid. This is Probable dipeptidase A (pepDA) from Streptococcus pyogenes serotype M3 (strain SSI-1).